Reading from the N-terminus, the 291-residue chain is Protease HtpX homolog (291 aa).

Transmembrane regions (helical) follow at residues 4-24 (VFLF…SARL) and 38-58 (LGML…ISLL). A Zn(2+)-binding site is contributed by H144. The active site involves E145. H148 is a Zn(2+) binding site. 2 helical membrane passes run 159-179 (LIQG…AYAL) and 199-219 (ISSI…VMYF). A Zn(2+)-binding site is contributed by E224.

This sequence belongs to the peptidase M48B family. Zn(2+) is required as a cofactor.

Its subcellular location is the cell inner membrane. The protein is Protease HtpX homolog of Chlorobium luteolum (strain DSM 273 / BCRC 81028 / 2530) (Pelodictyon luteolum).